A 225-amino-acid polypeptide reads, in one-letter code: Chromosome partition protein MukE (225 aa).

Residues 197–225 form a disordered region; it reads RDGEAMPIENHLQLNDETEESQPDSGEEE. Residues 212–225 show a composition bias toward acidic residues; sequence DETEESQPDSGEEE.

The protein belongs to the MukE family. In terms of assembly, interacts, and probably forms a ternary complex, with MukF and MukB. The complex formation is stimulated by calcium or magnesium.

The protein resides in the cytoplasm. Its subcellular location is the nucleoid. In terms of biological role, involved in chromosome condensation, segregation and cell cycle progression. May participate in facilitating chromosome segregation by condensation DNA from both sides of a centrally located replisome during cell division. Probably acts via its interaction with MukB and MukF. This is Chromosome partition protein MukE from Salmonella typhi.